Consider the following 361-residue polypeptide: Core-capsid bridging protein (361 aa).

The segment covering 311–321 has biased composition (basic residues); it reads RRRRVARRSKS. A disordered region spans residues 311–331; the sequence is RRRRVARRSKSTGRFVAAPRK.

Belongs to the adenoviridae core-capsid bridging protein family. In terms of assembly, monomer. Homodimer. Exists in equilibrium between monomers and dimers in solution. Interacts with the histone-like nucleoprotein; this interactions bridge the virus core to the capsid. Interacts with core protein X; this interactions bridge the virus core to the capsid. Interacts with the endosome lysis protein VI; this interactions bridge the virus core to the capsid. Interacts with the peripentonal hexons. Interacts with host NPM1; this interaction might play a role in virus assembly.

Its subcellular location is the virion. It is found in the host nucleus. The protein localises to the host nucleolus. Functionally, associates loosely with the viral DNA to form an outer shell around the nucleoprotein-DNA complex and links it with the capsid by binding the endosome lysis protein. Dissociates from the viral genome during entry. Might be involved in nuclear capsid assembly of the viral particles through its association with NPM1/nucleophosmin. This Bovine adenovirus 2 (BAdV-2) protein is Core-capsid bridging protein.